We begin with the raw amino-acid sequence, 164 residues long: Phosphopantetheine adenylyltransferase (164 aa).

Residue S10 participates in substrate binding. ATP contacts are provided by residues 10–11 (SF) and H18. 3 residues coordinate substrate: K42, L74, and R88. Residues 89 to 91 (GLR), E99, and 124 to 130 (YSFLSSS) each bind ATP.

It belongs to the bacterial CoaD family. As to quaternary structure, homohexamer. Mg(2+) is required as a cofactor.

The protein resides in the cytoplasm. It catalyses the reaction (R)-4'-phosphopantetheine + ATP + H(+) = 3'-dephospho-CoA + diphosphate. It functions in the pathway cofactor biosynthesis; coenzyme A biosynthesis; CoA from (R)-pantothenate: step 4/5. Its function is as follows. Reversibly transfers an adenylyl group from ATP to 4'-phosphopantetheine, yielding dephospho-CoA (dPCoA) and pyrophosphate. The sequence is that of Phosphopantetheine adenylyltransferase from Bacillus licheniformis (strain ATCC 14580 / DSM 13 / JCM 2505 / CCUG 7422 / NBRC 12200 / NCIMB 9375 / NCTC 10341 / NRRL NRS-1264 / Gibson 46).